Here is a 25-residue protein sequence, read N- to C-terminus: Chrysophsin-2 (25 aa).

Histidine amide is present on His25.

Gill.

The protein localises to the secreted. Functionally, has antibacterial activity against Gram-positive bacteria B.subtilis ATCC 6633, L.garvieae ATCC 49156 and S.iniae F-8502, and Gram-negative bacteria E.coli WT-2, V.anguillarum ATCC 19264, V.penaeicida KHA, V.harveyi ATCC 14126, V.vulnificus ATCC 33148 and A.salmonicida NCMB 1102. Has hemolytic activity against human red blood cells. Seems to disrupt the membranes by adopting an alpha helical conformation. May play a significant role in innate host defense. The polypeptide is Chrysophsin-2 (Pagrus major (Red sea bream)).